A 111-amino-acid polypeptide reads, in one-letter code: uncharacterized protein (111 aa).

The protein resides in the cytoplasm. It is found in the nucleus. This is an uncharacterized protein from Saccharomyces cerevisiae (strain ATCC 204508 / S288c) (Baker's yeast).